The chain runs to 178 residues: Large ribosomal subunit protein uL10 (178 aa).

Belongs to the universal ribosomal protein uL10 family. Part of the ribosomal stalk of the 50S ribosomal subunit. The N-terminus interacts with L11 and the large rRNA to form the base of the stalk. The C-terminus forms an elongated spine to which L12 dimers bind in a sequential fashion forming a multimeric L10(L12)X complex.

Its function is as follows. Forms part of the ribosomal stalk, playing a central role in the interaction of the ribosome with GTP-bound translation factors. The polypeptide is Large ribosomal subunit protein uL10 (Albidiferax ferrireducens (strain ATCC BAA-621 / DSM 15236 / T118) (Rhodoferax ferrireducens)).